Here is a 104-residue protein sequence, read N- to C-terminus: Probable guanidinium efflux system subunit GdnD (104 aa).

4 consecutive transmembrane segments (helical) span residues 3 to 23 (WICLIAAGILEMLGVTMMNQF), 31 to 51 (WIFLLIIGFAASFFLLSLAME), 58 to 78 (AYAVWTGIGTVGGALVGILFY), and 84 to 104 (GKRIFFIALILGSAVGLKLIS).

Belongs to the drug/metabolite transporter (DMT) superfamily. Small multidrug resistance (SMR) (TC 2.A.7.1) family. YkkC/YkkD subfamily. In terms of assembly, the efflux pump is composed of GdnC and GdnD.

The protein resides in the cell membrane. Its function is as follows. Probably involved in guanidinium transport. This chain is Probable guanidinium efflux system subunit GdnD, found in Bacillus licheniformis (strain ATCC 14580 / DSM 13 / JCM 2505 / CCUG 7422 / NBRC 12200 / NCIMB 9375 / NCTC 10341 / NRRL NRS-1264 / Gibson 46).